A 1104-amino-acid chain; its full sequence is Transient receptor potential cation channel subfamily M member 8 (1104 aa).

Topologically, residues 1–733 (MSFEGARLSM…LWYYVAFFTS (733 aa)) are cytoplasmic. Residues 734-758 (PFVVFSWNVVFYIAFLLLFAYVLLM) traverse the membrane as a helical segment. Residues 759-765 (DFHSVPH) lie on the Extracellular side of the membrane. Residues 766–789 (TPELILYALVFVLFCDEVRQWYMN) traverse the membrane as a helical segment. Ca(2+) contacts are provided by Glu782 and Gln785. Topologically, residues 790-796 (GVNYFTD) are cytoplasmic. A helical transmembrane segment spans residues 797–817 (LWNVMDTLGLFYFIAGIVFRL). The Ca(2+) site is built by Asn799 and Asp802. The Extracellular portion of the chain corresponds to 818–822 (HSSNK). The chain crosses the membrane as a helical span at residues 823-848 (SSLYSGRVIFCLDYIIFTLRLIHIFT). Topologically, residues 849 to 853 (VSRNL) are cytoplasmic. A helical membrane pass occupies residues 854–890 (GPKIIMLQRMLIDVFFFLFLFAVWMVAFGVARQGILR). Residues 891-895 (QNEQR) lie on the Extracellular side of the membrane. Residues 896–912 (WRWIFRSVIYEPYLAMF) constitute an intramembrane region (pore-forming). At 913–953 (GQVPSDVDSTTYDFSHCTFSGNESKPLCVELDEYNLPRFPE) the chain is on the extracellular side. A helical membrane pass occupies residues 954–984 (WITIPLVCIYMLSTNILLVNLLVAMFGYTVG). Over 985 to 1104 (IVQENNDQVW…LLKEIANKIK (120 aa)) the chain is Cytoplasmic. Positions 1067 to 1104 (INTKANDNAEEMRHRFRQLDTKLNDLKGLLKEIANKIK) form a coiled coil.

Belongs to the transient receptor (TC 1.A.4) family. LTrpC subfamily. TRPM8 sub-subfamily. Homotetramer. Interacts (via N-terminus and C-terminus domains) with TCAF1; the interaction stimulates TRPM8 channel activity. Interacts (via N-terminus and C-terminus domains) with TCAF2; the interaction inhibits TRPM8 channel activity. Expressed in dorsal root and trigeminal ganglia. Specifically expressed in a subset of sensory neurons, including cold-sensitive neurons in trigeminal neurons.

It is found in the cell membrane. The protein resides in the membrane raft. It catalyses the reaction Ca(2+)(in) = Ca(2+)(out). The catalysed reaction is Na(+)(in) = Na(+)(out). The enzyme catalyses K(+)(in) = K(+)(out). With respect to regulation, activated by cold temperatures and by both natural and synthetic cooling compounds such as menthol and icilin. Activation of the channel requires the presence of PI(4,5)P2; PI(4,5)P2 is necessary to gate the channel. Activated by intracellular Ca(2+). Functionally, non-selective ion channel permeable to monovalent and divalent cations, including Na(+), K(+), and Ca(2+), with higher permeability for Ca(2+). Activated by multiple factors, such as temperature, voltage, pressure, and changes in osmolality. Activated by cool temperatures (&lt;23-28 degrees Celsius) and by chemical ligands evoking a sensation of coolness, such as menthol and icilin, therefore plays a central role in the detection of environmental cold temperatures. TRPM8 is a voltage-dependent channel; its activation by cold or chemical ligands shifts its voltage thresholds towards physiological membrane potentials, leading to the opening of the channel. In addition to its critical role in temperature sensing, regulates basal tear secretion by sensing evaporation-induced cooling and changes in osmolality. In Rattus norvegicus (Rat), this protein is Transient receptor potential cation channel subfamily M member 8 (Trpm8).